Reading from the N-terminus, the 390-residue chain is Multidrug export protein EmrA (390 aa).

Over 1-24 the chain is Cytoplasmic; that stretch reads MSANAETQTPQQPVKKSGKRKRLL. The helical transmembrane segment at 25 to 45 threads the bilayer; sequence LLLTLLFIIIAVAIGIYWFLV. Topologically, residues 46–390 are periplasmic; the sequence is LRHFEETDDA…IDDIVKANAG (345 aa). The stretch at 120–180 forms a coiled coil; the sequence is INSKQLQANI…QAQLDVAIQQ (61 aa).

Belongs to the membrane fusion protein (MFP) (TC 8.A.1) family. As to quaternary structure, homodimer and homotrimer. Part of the tripartite efflux system EmrAB-TolC, which is composed of an inner membrane transporter, EmrB, a periplasmic membrane fusion protein, EmrA, and an outer membrane component, TolC. The complex forms a large protein conduit and can translocate molecules across both the inner and outer membranes. Interacts with EmrB. EmrAB complex forms a dimer in vitro.

Its subcellular location is the cell inner membrane. Part of the tripartite efflux system EmrAB-TolC, which confers resistance to antibiotics such as CCCP, FCCP, 2,4-dinitrophenol and nalidixic acid. EmrA is a drug-binding protein that provides a physical link between EmrB and TolC. This Escherichia coli (strain K12) protein is Multidrug export protein EmrA (emrA).